A 651-amino-acid polypeptide reads, in one-letter code: MSSTESPVPAAAAPAEAVPASTPAPAAEQPAVGNGEQRNNADAANNTSLYVGELDPSVTEAMLFEIFSMIGTVASIRVCRDAVTRRSLGYAYVNFLNAADGERAMEQLNYSLIRNRPCRIMWSQRDPALRRTGQGNIFIKNLDAGIDNKALHDTFAAFGNILSCKVATNETGSLGYGFVHYETAEAAEAAIKHVNGMLLNDKKVYVGHHIPRKERQAKIEETRANFTNVYAKNVDPEVTDDEFEKLFTKFGKITSCVLQRDEDGKSKGFGFVNFEDHNEAQKAVDELHDSDFKGQKLFVARAQKKSEREEELRRSYEAAKNEKLAKFQGVNLYLKNIPESYDDERLREEFAPFGAITSCKIMRAPSGVSRGFGFVCYSAPEEANKAVSEMNGKMLDNRPLYVALAQRKDVRRQQLEAQIMQRNQLRLQQQAAAQGMGYPGPGMYYPQPGAFPGQPGGMVPRPRYAPAGMMPQGMPMAPYGQPGQFPAGMMPQGYRPARPPRGAPNAAGGPAPPAGARPPTGVNGAPRPAGQPVPGQPMPRGPAARPAGRPEADQPGALTAAALAKASPEEQKQMLGEAIYPKVAASQPELAGKLTGMILELPVTELLHLLEESEALDAKVNEALEVLKEYQQNDSAGAEAEANAEAPKTEA.

The span at 1–27 (MSSTESPVPAAAAPAEAVPASTPAPAA) shows a compositional bias: low complexity. A disordered region spans residues 1-42 (MSSTESPVPAAAAPAEAVPASTPAPAAEQPAVGNGEQRNNAD). RRM domains are found at residues 47-125 (TSLY…WSQR), 135-211 (GNIF…HHIP), 227-304 (TNVY…RAQK), and 330-407 (VNLY…LAQR). 2 disordered regions span residues 481 to 554 (QPGQ…EADQ) and 632 to 651 (QNDS…KTEA). The segment covering 529-540 (AGQPVPGQPMPR) has biased composition (pro residues). The region spanning 555-632 (PGALTAAALA…ALEVLKEYQQ (78 aa)) is the PABC domain. Low complexity predominate over residues 636-651 (AGAEAEANAEAPKTEA).

The protein belongs to the polyadenylate-binding protein type-1 family. As to quaternary structure, part of large ribonucleoprotein complexes (mRNPs) containing RNA-binding proteins RRM4 and PAB1, endosome-binding protein UPA1, core scaffold protein UPA2 and associated factor GRP1. Interacts (via PABC domain) with UPA1 (via PAM2 domain). Interacts (via PABC domain) with UPA2 (via PAM2 domains).

The protein resides in the cytoplasm. The protein localises to the cytoskeleton. It is found in the endosome. RNA-binding protein involved in the formation of polar-growing hyphae which is essential for infection by the plant pathogen. Component of endosomal mRNA transport that regulates polarity of the infectious hyphae by transporting a broad spectrum of cargo mRNAs from the nucleus to cell poles. This Mycosarcoma maydis (Corn smut fungus) protein is Polyadenylate-binding protein 1.